The chain runs to 257 residues: Ethanolamine ammonia-lyase small subunit (257 aa).

The adenosylcob(III)alamin site is built by valine 153, glutamate 174, and cysteine 203.

Belongs to the EutC family. As to quaternary structure, the basic unit is a heterodimer which dimerizes to form tetramers. The heterotetramers trimerize; 6 large subunits form a core ring with 6 small subunits projecting outwards. Adenosylcob(III)alamin is required as a cofactor.

Its subcellular location is the bacterial microcompartment. It catalyses the reaction ethanolamine = acetaldehyde + NH4(+). The protein operates within amine and polyamine degradation; ethanolamine degradation. Its function is as follows. Catalyzes the deamination of various vicinal amino-alcohols to oxo compounds. Allows this organism to utilize ethanolamine as the sole source of nitrogen and carbon in the presence of external vitamin B12. The chain is Ethanolamine ammonia-lyase small subunit from Rhodococcus erythropolis (Arthrobacter picolinophilus).